The following is a 167-amino-acid chain: Schlafen-like protein (167 aa).

Belongs to the Schlafen family. Subgroup poxviridae B3 subfamily.

The polypeptide is Schlafen-like protein (Bos taurus (Bovine)).